A 126-amino-acid polypeptide reads, in one-letter code: Phosphoribosyl-AMP cyclohydrolase (126 aa).

Residue Asp82 coordinates Mg(2+). Position 83 (Cys83) interacts with Zn(2+). Mg(2+)-binding residues include Asp84 and Asp86. Residues Cys99 and Cys106 each contribute to the Zn(2+) site.

The protein belongs to the PRA-CH family. In terms of assembly, homodimer. Mg(2+) serves as cofactor. The cofactor is Zn(2+).

It localises to the cytoplasm. The enzyme catalyses 1-(5-phospho-beta-D-ribosyl)-5'-AMP + H2O = 1-(5-phospho-beta-D-ribosyl)-5-[(5-phospho-beta-D-ribosylamino)methylideneamino]imidazole-4-carboxamide. It functions in the pathway amino-acid biosynthesis; L-histidine biosynthesis; L-histidine from 5-phospho-alpha-D-ribose 1-diphosphate: step 3/9. Its function is as follows. Catalyzes the hydrolysis of the adenine ring of phosphoribosyl-AMP. In Micrococcus luteus (strain ATCC 4698 / DSM 20030 / JCM 1464 / CCM 169 / CCUG 5858 / IAM 1056 / NBRC 3333 / NCIMB 9278 / NCTC 2665 / VKM Ac-2230) (Micrococcus lysodeikticus), this protein is Phosphoribosyl-AMP cyclohydrolase.